The sequence spans 393 residues: 2-methylcitrate synthase (393 aa).

Residues arginine 92 and histidine 207 each contribute to the substrate site. The active site involves histidine 242. 275–279 (KIMGF) serves as a coordination point for CoA. The active site involves histidine 281. Arginine 290 is a binding site for substrate. Aspartate 332 is a catalytic residue. Substrate-binding residues include arginine 357 and arginine 376.

It belongs to the citrate synthase family. Homodimer.

The catalysed reaction is propanoyl-CoA + oxaloacetate + H2O = (2S,3S)-2-methylcitrate + CoA + H(+). The enzyme catalyses oxaloacetate + acetyl-CoA + H2O = citrate + CoA + H(+). It functions in the pathway organic acid metabolism; propanoate degradation. Its pathway is carbohydrate metabolism; tricarboxylic acid cycle; isocitrate from oxaloacetate: step 1/2. Functionally, involved in the catabolism of short chain fatty acids (SCFA) via the tricarboxylic acid (TCA)(acetyl degradation route) and via the 2-methylcitrate cycle I (propionate degradation route). Catalyzes the Claisen condensation of propionyl-CoA and oxaloacetate (OAA) to yield 2-methylcitrate (2-MC) and CoA. Also catalyzes the condensation of oxaloacetate with acetyl-CoA. This chain is 2-methylcitrate synthase (gltA1), found in Mycobacterium tuberculosis (strain ATCC 35801 / TMC 107 / Erdman).